A 105-amino-acid chain; its full sequence is MNAGQPTLAAYLILGAMLFSIGVVGVFLNRKNVIILLMAIELLLLAVNINLVAFSRYLGNLDGQVFVFFILTVAAAEAAIGLAILVAYFRNRHSINVDDIDELRG.

Helical transmembrane passes span Leu-8 to Leu-28, Ile-34 to Phe-54, and Val-65 to Leu-85.

This sequence belongs to the complex I subunit 4L family. In terms of assembly, NDH-1 is composed of 14 different subunits. Subunits NuoA, H, J, K, L, M, N constitute the membrane sector of the complex.

It localises to the cell inner membrane. It catalyses the reaction a quinone + NADH + 5 H(+)(in) = a quinol + NAD(+) + 4 H(+)(out). Its function is as follows. NDH-1 shuttles electrons from NADH, via FMN and iron-sulfur (Fe-S) centers, to quinones in the respiratory chain. The immediate electron acceptor for the enzyme in this species is believed to be ubiquinone. Couples the redox reaction to proton translocation (for every two electrons transferred, four hydrogen ions are translocated across the cytoplasmic membrane), and thus conserves the redox energy in a proton gradient. The polypeptide is NADH-quinone oxidoreductase subunit K (Acidithiobacillus ferrooxidans (strain ATCC 23270 / DSM 14882 / CIP 104768 / NCIMB 8455) (Ferrobacillus ferrooxidans (strain ATCC 23270))).